A 1191-amino-acid polypeptide reads, in one-letter code: Protogenin (1191 aa).

An N-terminal signal peptide occupies residues 1–23; it reads MAPPVRPGMLPLLLLLLLPPLGS. 4 consecutive Ig-like domains span residues 24–124, 126–216, 229–316, and 321–405; these read VPGV…AHLT, STIS…ASLT, PTII…ATLT, and PSFV…ARLT. Topologically, residues 24–943 are extracellular; it reads VPGVWSFSEL…YYHLDQKSMT (920 aa). 2 disulfide bridges follow: C54–C107 and C150–C199. N237 carries N-linked (GlcNAc...) asparagine glycosylation. Intrachain disulfides connect C250/C298 and C342/C389. 5 consecutive Fibronectin type-III domains span residues 415-509, 511-607, 612-711, 718-811, and 816-911; these read APYN…TLED, PLRP…TPKA, APKS…VRDR, PPHH…TLPE, and PPVG…VLPK. N624 is a glycosylation site (N-linked (GlcNAc...) asparagine). Residues 944–964 traverse the membrane as a helical segment; sequence GIAVGVGIALTCILICVLILI. Residues 965–1191 lie on the Cytoplasmic side of the membrane; that stretch reads YRSKARKSSA…LRYAAEGFPV (227 aa). Disordered regions lie at residues 975-1010 and 1079-1191; these read SKTAQSGTQPLSQASASVAAGSDMGKNLERATETAE and ISDE…GFPV. Residues 977–990 show a composition bias toward polar residues; it reads TAQSGTQPLSQASA. Residues 1104 to 1132 are compositionally biased toward basic and acidic residues; the sequence is DTEHSANSEGSHETGDSGRFSHESNDEIH. 2 stretches are compositionally biased toward polar residues: residues 1135-1146 and 1171-1180; these read SVISSTPPTSNP and EQTSAPQTSA.

The protein belongs to the immunoglobulin superfamily. DCC family. As to expression, from mid-gastrulation to early somite stages, restricted to posterior neural plate and mesoderm with an anterior limit at the level of the rhombencephalon. Posterior restriction is progressively lost during somitogenesis. Expression is maintained in the neural tube and paraxial mesoderm during this process. As development proceeds, further restricted to the dorsal parts of the spinal cord and somites. In parallel, expression progresses caudally during axis elongation.

It localises to the membrane. Functionally, may play a role in anteroposterior axis elongation. This Mus musculus (Mouse) protein is Protogenin.